Here is a 198-residue protein sequence, read N- to C-terminus: Charged multivesicular body protein 2a homolog 2 (198 aa).

Residues 11–42 are a coiled coil; sequence KEVLRENQRNLNKSMREIDRERVALQNQEKKI.

The protein belongs to the SNF7 family. Probable core component of the endosomal sorting required for transport complex III (ESCRT-III). ESCRT-III components are thought to multimerize to form a flat lattice on the perimeter membrane of the endosome.

It is found in the endosome membrane. Functionally, probable core component of the endosomal sorting required for transport complex III (ESCRT-III) which is involved in multivesicular bodies (MVBs) formation and sorting of endosomal cargo proteins into MVBs. MVBs contain intraluminal vesicles (ILVs) that are generated by invagination and scission from the limiting membrane of the endosome and are delivered to lysosomes enabling degradation of membrane proteins. The polypeptide is Charged multivesicular body protein 2a homolog 2 (chmp2a2) (Dictyostelium discoideum (Social amoeba)).